The chain runs to 643 residues: 3D-(3,5/4)-trihydroxycyclohexane-1,2-dione hydrolase (643 aa).

Glu-65 serves as a coordination point for thiamine diphosphate. The segment at 441-521 is thiamine pyrophosphate binding; sequence SLPGDLQRMW…VNVLLFDNCG (81 aa). Positions 492 and 519 each coordinate Mg(2+).

Belongs to the TPP enzyme family. Requires Mg(2+) as cofactor. Thiamine diphosphate is required as a cofactor.

The catalysed reaction is 3D-3,5/4-trihydroxycyclohexane-1,2-dione + H2O = 5-deoxy-D-glucuronate + H(+). It functions in the pathway polyol metabolism; myo-inositol degradation into acetyl-CoA; acetyl-CoA from myo-inositol: step 3/7. In terms of biological role, involved in the cleavage of the C1-C2 bond of 3D-(3,5/4)-trihydroxycyclohexane-1,2-dione (THcHDO) to yield 5-deoxy-glucuronate (5DG). In Clostridium botulinum (strain Alaska E43 / Type E3), this protein is 3D-(3,5/4)-trihydroxycyclohexane-1,2-dione hydrolase.